Consider the following 905-residue polypeptide: Alanine--tRNA ligase (905 aa).

Residues His-569, His-573, Cys-693, and His-697 each contribute to the Zn(2+) site.

The protein belongs to the class-II aminoacyl-tRNA synthetase family. Requires Zn(2+) as cofactor.

The protein localises to the cytoplasm. The catalysed reaction is tRNA(Ala) + L-alanine + ATP = L-alanyl-tRNA(Ala) + AMP + diphosphate. Functionally, catalyzes the attachment of alanine to tRNA(Ala) in a two-step reaction: alanine is first activated by ATP to form Ala-AMP and then transferred to the acceptor end of tRNA(Ala). Also edits incorrectly charged Ser-tRNA(Ala) and Gly-tRNA(Ala) via its editing domain. The polypeptide is Alanine--tRNA ligase (Roseiflexus castenholzii (strain DSM 13941 / HLO8)).